The following is a 346-amino-acid chain: Holliday junction branch migration complex subunit RuvB (346 aa).

Residues 1–182 (MSEAARLIAP…FGIPVRLNFY (182 aa)) are large ATPase domain (RuvB-L). ATP-binding positions include Arg22, Gly63, Lys66, Thr67, Thr68, 129-131 (EDF), Arg172, Tyr182, and Arg219. Thr67 contacts Mg(2+). The segment at 183–253 (TVEELELIVR…IADEALTRLL (71 aa)) is small ATPAse domain (RuvB-S). Residues 256-346 (SMGLDQLDRR…SQFRLTLEDD (91 aa)) are head domain (RuvB-H). Residues Arg292, Arg311, and Arg316 each coordinate DNA.

The protein belongs to the RuvB family. Homohexamer. Forms an RuvA(8)-RuvB(12)-Holliday junction (HJ) complex. HJ DNA is sandwiched between 2 RuvA tetramers; dsDNA enters through RuvA and exits via RuvB. An RuvB hexamer assembles on each DNA strand where it exits the tetramer. Each RuvB hexamer is contacted by two RuvA subunits (via domain III) on 2 adjacent RuvB subunits; this complex drives branch migration. In the full resolvosome a probable DNA-RuvA(4)-RuvB(12)-RuvC(2) complex forms which resolves the HJ.

It localises to the cytoplasm. The catalysed reaction is ATP + H2O = ADP + phosphate + H(+). Its function is as follows. The RuvA-RuvB-RuvC complex processes Holliday junction (HJ) DNA during genetic recombination and DNA repair, while the RuvA-RuvB complex plays an important role in the rescue of blocked DNA replication forks via replication fork reversal (RFR). RuvA specifically binds to HJ cruciform DNA, conferring on it an open structure. The RuvB hexamer acts as an ATP-dependent pump, pulling dsDNA into and through the RuvAB complex. RuvB forms 2 homohexamers on either side of HJ DNA bound by 1 or 2 RuvA tetramers; 4 subunits per hexamer contact DNA at a time. Coordinated motions by a converter formed by DNA-disengaged RuvB subunits stimulates ATP hydrolysis and nucleotide exchange. Immobilization of the converter enables RuvB to convert the ATP-contained energy into a lever motion, pulling 2 nucleotides of DNA out of the RuvA tetramer per ATP hydrolyzed, thus driving DNA branch migration. The RuvB motors rotate together with the DNA substrate, which together with the progressing nucleotide cycle form the mechanistic basis for DNA recombination by continuous HJ branch migration. Branch migration allows RuvC to scan DNA until it finds its consensus sequence, where it cleaves and resolves cruciform DNA. In Rhizobium meliloti (strain 1021) (Ensifer meliloti), this protein is Holliday junction branch migration complex subunit RuvB.